We begin with the raw amino-acid sequence, 384 residues long: Chaperone protein DnaJ 1 (384 aa).

The region spanning 4–68 is the J domain; sequence DYYGLLGVAR…EKRRIVDMGG (65 aa). Residues 133-215 form a CR-type zinc finger; sequence GVTKHLTVDT…CGGDGRVRAR (83 aa). Residues Cys-146, Cys-149, Cys-163, Cys-166, Cys-189, Cys-192, Cys-203, and Cys-206 each coordinate Zn(2+). 4 CXXCXGXG motif repeats span residues 146–153, 163–170, 189–196, and 203–210; these read CDACHGSG, CETCGGAG, CPTCRGAG, and CHKCGGDG.

Belongs to the DnaJ family. As to quaternary structure, homodimer. Zn(2+) is required as a cofactor.

The protein localises to the cytoplasm. Its function is as follows. Participates actively in the response to hyperosmotic and heat shock by preventing the aggregation of stress-denatured proteins and by disaggregating proteins, also in an autonomous, DnaK-independent fashion. Unfolded proteins bind initially to DnaJ; upon interaction with the DnaJ-bound protein, DnaK hydrolyzes its bound ATP, resulting in the formation of a stable complex. GrpE releases ADP from DnaK; ATP binding to DnaK triggers the release of the substrate protein, thus completing the reaction cycle. Several rounds of ATP-dependent interactions between DnaJ, DnaK and GrpE are required for fully efficient folding. Also involved, together with DnaK and GrpE, in the DNA replication of plasmids through activation of initiation proteins. The sequence is that of Chaperone protein DnaJ 1 from Nocardia farcinica (strain IFM 10152).